We begin with the raw amino-acid sequence, 187 residues long: UPF0340 protein SPD_0576 (187 aa).

This sequence belongs to the UPF0340 family.

The chain is UPF0340 protein SPD_0576 from Streptococcus pneumoniae serotype 2 (strain D39 / NCTC 7466).